Consider the following 877-residue polypeptide: DNA repair protein rad16 (877 aa).

Residue serine 71 is modified to Phosphoserine; by CK2. The segment at 440–490 is disordered; the sequence is SKSIKKPEPSKEREASNTTSRKGVPPSKRRRVRGGNNATSRTTSDNTDAND. Residues 444 to 454 are compositionally biased toward basic and acidic residues; it reads KKPEPSKEREA. The segment covering 475–490 has biased composition (polar residues); it reads NNATSRTTSDNTDAND. The ERCC4 domain occupies 652–732; sequence RVIVDLREFR…IPVLLIEFEQ (81 aa).

The protein belongs to the XPF family. In terms of assembly, heterodimer composed of rad16 and swi10.

Its subcellular location is the nucleus. The protein localises to the cytoplasm. It localises to the cytoskeleton. The protein resides in the microtubule organizing center. It is found in the spindle pole body. Its function is as follows. Endonuclease that specifically degrades single-stranded DNA and which is involved in nucleotide excision repair of DNA damaged with UV light, bulky adducts, or cross-linking agents. Required for double strand break-induced interchromosomal gene conversion. This Schizosaccharomyces pombe (strain 972 / ATCC 24843) (Fission yeast) protein is DNA repair protein rad16 (rad16).